The chain runs to 435 residues: 3-phosphoshikimate 1-carboxyvinyltransferase (435 aa).

3-phosphoshikimate is bound by residues lysine 23, serine 24, and arginine 28. Phosphoenolpyruvate is bound at residue lysine 23. The phosphoenolpyruvate site is built by glycine 97 and arginine 125. Residues serine 170, serine 171, glutamine 172, serine 198, aspartate 314, asparagine 338, and lysine 342 each coordinate 3-phosphoshikimate. Residue glutamine 172 participates in phosphoenolpyruvate binding. Aspartate 314 (proton acceptor) is an active-site residue. The phosphoenolpyruvate site is built by arginine 346, arginine 388, and lysine 413.

This sequence belongs to the EPSP synthase family. In terms of assembly, monomer.

Its subcellular location is the cytoplasm. The catalysed reaction is 3-phosphoshikimate + phosphoenolpyruvate = 5-O-(1-carboxyvinyl)-3-phosphoshikimate + phosphate. Its pathway is metabolic intermediate biosynthesis; chorismate biosynthesis; chorismate from D-erythrose 4-phosphate and phosphoenolpyruvate: step 6/7. Its function is as follows. Catalyzes the transfer of the enolpyruvyl moiety of phosphoenolpyruvate (PEP) to the 5-hydroxyl of shikimate-3-phosphate (S3P) to produce enolpyruvyl shikimate-3-phosphate and inorganic phosphate. The polypeptide is 3-phosphoshikimate 1-carboxyvinyltransferase (Sodalis glossinidius (strain morsitans)).